The primary structure comprises 226 residues: Eukaryotic translation initiation factor 3 subunit K (226 aa).

A PCI domain is found at 42–200 (YNLDANLSLL…QLIVLPRNEF (159 aa)).

This sequence belongs to the eIF-3 subunit K family. In terms of assembly, component of the eukaryotic translation initiation factor 3 (eIF-3) complex.

The protein localises to the cytoplasm. Component of the eukaryotic translation initiation factor 3 (eIF-3) complex, which is involved in protein synthesis of a specialized repertoire of mRNAs and, together with other initiation factors, stimulates binding of mRNA and methionyl-tRNAi to the 40S ribosome. The eIF-3 complex specifically targets and initiates translation of a subset of mRNAs involved in cell proliferation. The polypeptide is Eukaryotic translation initiation factor 3 subunit K (TIF3K1) (Oryza sativa subsp. japonica (Rice)).